The primary structure comprises 506 residues: Maturase K (506 aa).

It belongs to the intron maturase 2 family. MatK subfamily.

The protein resides in the plastid. Its subcellular location is the chloroplast. Functionally, usually encoded in the trnK tRNA gene intron. Probably assists in splicing its own and other chloroplast group II introns. The polypeptide is Maturase K (Styphnolobium japonicum (Japanese pagoda tree)).